The primary structure comprises 249 residues: Methylthioribulose-1-phosphate dehydratase (249 aa).

The segment at 1-25 (MVDIKPEQTQEGNNNDHLVQSDDPE) is disordered. Positions 9–18 (TQEGNNNDHL) are enriched in polar residues. A substrate-binding site is contributed by Cys105. Zn(2+) contacts are provided by His122 and His124. Glu151 serves as the catalytic Proton donor/acceptor. His207 is a binding site for Zn(2+).

The protein belongs to the aldolase class II family. MtnB subfamily. Zn(2+) serves as cofactor.

The protein localises to the cytoplasm. It carries out the reaction 5-(methylsulfanyl)-D-ribulose 1-phosphate = 5-methylsulfanyl-2,3-dioxopentyl phosphate + H2O. It functions in the pathway amino-acid biosynthesis; L-methionine biosynthesis via salvage pathway; L-methionine from S-methyl-5-thio-alpha-D-ribose 1-phosphate: step 2/6. Catalyzes the dehydration of methylthioribulose-1-phosphate (MTRu-1-P) into 2,3-diketo-5-methylthiopentyl-1-phosphate (DK-MTP-1-P). The protein is Methylthioribulose-1-phosphate dehydratase of Arthroderma otae (strain ATCC MYA-4605 / CBS 113480) (Microsporum canis).